A 140-amino-acid polypeptide reads, in one-letter code: Sec-independent protein translocase protein TatB (140 aa).

The helical transmembrane segment at 2 to 22 (LPGIGFSELLLIGLAALIIIG) threads the bilayer. The disordered stretch occupies residues 90-140 (VNSAVMREHPVSPPPPATPPAPPAELPPEAAPHADSQNAPPEADPAKGDRT). Over residues 100–119 (VSPPPPATPPAPPAELPPEA) the composition is skewed to pro residues.

Belongs to the TatB family. The Tat system comprises two distinct complexes: a TatABC complex, containing multiple copies of TatA, TatB and TatC subunits, and a separate TatA complex, containing only TatA subunits. Substrates initially bind to the TatABC complex, which probably triggers association of the separate TatA complex to form the active translocon.

The protein resides in the cell inner membrane. Part of the twin-arginine translocation (Tat) system that transports large folded proteins containing a characteristic twin-arginine motif in their signal peptide across membranes. Together with TatC, TatB is part of a receptor directly interacting with Tat signal peptides. TatB may form an oligomeric binding site that transiently accommodates folded Tat precursor proteins before their translocation. This chain is Sec-independent protein translocase protein TatB, found in Hyphomonas neptunium (strain ATCC 15444).